A 211-amino-acid polypeptide reads, in one-letter code: MGFSMFFSPENDVSHHSSPYASVDCTLSLGTPSTRLCNEDDERRFSSHTSDTIGWDFLNGSKKGGGGGGHNLLARRCANCDTTSTPLWRNGPRGPKSLCNACGIRFKKEERRASTARNSTSGGGSTAAGVPTLDHQASANYYYNNNNQYASSSPWHHQHNTQRVPYYSPANNEYSYVDDVRVVDHDVTTDPFLSWRLNVADRTGLVHDFTM.

A GATA-type zinc finger spans residues 77 to 102 (CANCDTTSTPLWRNGPRGPKSLCNAC). The segment at 111–131 (RRASTARNSTSGGGSTAAGVP) is disordered.

This sequence belongs to the type IV zinc-finger family. Class B subfamily. Forms heterodimers with GATA18.

The protein resides in the nucleus. In terms of biological role, transcriptional regulator that specifically binds 5'-GATA-3' or 5'-GAT-3' motifs within gene promoters. Regulates both flower and shoot apical meristem (SAM) development, especially for establishing organ boundaries in shoots and flowers, probably by controlling the number and position of WUS-expressing cells. The protein is GATA transcription factor 19 of Arabidopsis thaliana (Mouse-ear cress).